A 490-amino-acid chain; its full sequence is Betaine aldehyde dehydrogenase (490 aa).

Residues T26, I27, and D93 each contribute to the K(+) site. An NAD(+)-binding site is contributed by 150–152; the sequence is GAW. The active-site Charge relay system is the K162. 176 to 179 lines the NAD(+) pocket; it reads KPSE. Residue V180 participates in K(+) binding. An NAD(+)-binding site is contributed by 230–233; that stretch reads GVAS. L246 lines the K(+) pocket. E252 serves as the catalytic Proton acceptor. The NAD(+) site is built by G254, C286, and E387. The active-site Nucleophile is C286. At C286 the chain carries Cysteine sulfenic acid (-SOH). Residues K457 and G460 each coordinate K(+). E464 acts as the Charge relay system in catalysis.

It belongs to the aldehyde dehydrogenase family. Dimer of dimers. It depends on K(+) as a cofactor.

It carries out the reaction betaine aldehyde + NAD(+) + H2O = glycine betaine + NADH + 2 H(+). Its pathway is amine and polyamine biosynthesis; betaine biosynthesis via choline pathway; betaine from betaine aldehyde: step 1/1. Its function is as follows. Involved in the biosynthesis of the osmoprotectant glycine betaine. Catalyzes the irreversible oxidation of betaine aldehyde to the corresponding acid. This is Betaine aldehyde dehydrogenase from Escherichia coli O139:H28 (strain E24377A / ETEC).